A 299-amino-acid chain; its full sequence is GTPase Era (299 aa).

Residues 4–171 (KSGFVAILGR…VDILSENLGE (168 aa)) enclose the Era-type G domain. Residues 12 to 19 (GRPNVGKS) form a G1 region. A GTP-binding site is contributed by 12–19 (GRPNVGKS). The interval 38-42 (QTTRN) is G2. Positions 59-62 (DTPG) are G3. GTP is bound by residues 59–63 (DTPGI) and 121–124 (NKID). Residues 121 to 124 (NKID) form a G4 region. The interval 150–152 (ISA) is G5. The region spanning 202–280 (TREEIPHSVA…FLETWVKVKK (79 aa)) is the KH type-2 domain.

The protein belongs to the TRAFAC class TrmE-Era-EngA-EngB-Septin-like GTPase superfamily. Era GTPase family. In terms of assembly, monomer.

The protein resides in the cytoplasm. It localises to the cell membrane. In terms of biological role, an essential GTPase that binds both GDP and GTP, with rapid nucleotide exchange. Plays a role in 16S rRNA processing and 30S ribosomal subunit biogenesis and possibly also in cell cycle regulation and energy metabolism. This is GTPase Era from Streptococcus pneumoniae (strain JJA).